Consider the following 182-residue polypeptide: Glutathione-regulated potassium-efflux system ancillary protein KefG (182 aa).

The protein belongs to the NAD(P)H dehydrogenase (quinone) family. KefG subfamily. As to quaternary structure, interacts with KefB.

It is found in the cell inner membrane. The enzyme catalyses a quinone + NADH + H(+) = a quinol + NAD(+). It catalyses the reaction a quinone + NADPH + H(+) = a quinol + NADP(+). In terms of biological role, regulatory subunit of a potassium efflux system that confers protection against electrophiles. Required for full activity of KefB. This Yersinia pestis bv. Antiqua (strain Nepal516) protein is Glutathione-regulated potassium-efflux system ancillary protein KefG.